The sequence spans 378 residues: Pseudouridine kinase (378 aa).

Residues Asp-12, Thr-26, 37 to 41 (GVARN), Val-38, Asn-137, and Lys-166 each bind pseudouridine. Positions 181 and 237 each coordinate Mg(2+). Thr-237, Gly-239, Gly-242, Thr-298, Leu-306, and Gly-310 together coordinate ATP. Residue Asp-311 participates in pseudouridine binding.

Belongs to the carbohydrate kinase PfkB family. Forms homodimers.

The protein localises to the peroxisome. It catalyses the reaction pseudouridine + ATP = psi-UMP + ADP + H(+). Its function is as follows. Catalyzes the phosphorylation of pseudouridine to pseudouridine 5'-phosphate (PsiMP). Catalyzes the first step in a pseudouridine degradation pathway. Acts together with the pseudouridine 5'-phosphate glycosidase PUMY in the peroxisome to prevent toxic pseudouridine monophosphate accumulation. This chain is Pseudouridine kinase, found in Arabidopsis thaliana (Mouse-ear cress).